The chain runs to 581 residues: Guanine nucleotide-binding protein-like 3 homolog (581 aa).

Positions 1-49 are enriched in basic residues; it reads MALKRLKTKKSKRLTGRLKHKIEKKVRDHNKKERRAAKKNPKKGSKKQK. Residues 1–50 form a disordered region; sequence MALKRLKTKKSKRLTGRLKHKIEKKVRDHNKKERRAAKKNPKKGSKKQKL. Positions 64–108 form a coiled coil; that stretch reads LKEVEEAKQRQEAERLARREAFKAEREQNKFKTLESMVEDADMRS. Residue serine 99 is modified to Phosphoserine. The region spanning 141–325 is the CP-type G domain; sequence FKEFRKVIEN…LIDCPGIVFT (185 aa). GTP-binding positions include 189 to 192, 274 to 281, and 318 to 321; these read NKAD, GIPNVGKS, and DCPG. Residues 500 to 517 show a composition bias toward basic and acidic residues; sequence KPAKGRKRKLDEEKEKVD. The interval 500-519 is disordered; sequence KPAKGRKRKLDEEKEKVDPS.

This sequence belongs to the TRAFAC class YlqF/YawG GTPase family.

Its subcellular location is the nucleus. The protein localises to the nucleolus. Its function is as follows. May play a role in regulating cellular proliferation. This Drosophila melanogaster (Fruit fly) protein is Guanine nucleotide-binding protein-like 3 homolog (Ns1).